A 187-amino-acid polypeptide reads, in one-letter code: GTP cyclohydrolase 1 1 (187 aa).

The protein belongs to the GTP cyclohydrolase I family. Homomer.

It catalyses the reaction GTP + H2O = 7,8-dihydroneopterin 3'-triphosphate + formate + H(+). It functions in the pathway cofactor biosynthesis; 7,8-dihydroneopterin triphosphate biosynthesis; 7,8-dihydroneopterin triphosphate from GTP: step 1/1. The polypeptide is GTP cyclohydrolase 1 1 (Pseudomonas syringae pv. tomato (strain ATCC BAA-871 / DC3000)).